Reading from the N-terminus, the 282-residue chain is 2,3,4,5-tetrahydropyridine-2,6-dicarboxylate N-succinyltransferase (282 aa).

Residues Arg-109 and Asp-146 each contribute to the substrate site.

This sequence belongs to the transferase hexapeptide repeat family. Homotrimer.

Its subcellular location is the cytoplasm. The catalysed reaction is (S)-2,3,4,5-tetrahydrodipicolinate + succinyl-CoA + H2O = (S)-2-succinylamino-6-oxoheptanedioate + CoA. Its pathway is amino-acid biosynthesis; L-lysine biosynthesis via DAP pathway; LL-2,6-diaminopimelate from (S)-tetrahydrodipicolinate (succinylase route): step 1/3. This Bartonella bacilliformis (strain ATCC 35685 / KC583 / Herrer 020/F12,63) protein is 2,3,4,5-tetrahydropyridine-2,6-dicarboxylate N-succinyltransferase.